A 64-amino-acid polypeptide reads, in one-letter code: Large ribosomal subunit protein uL30 (64 aa).

The protein belongs to the universal ribosomal protein uL30 family. In terms of assembly, part of the 50S ribosomal subunit.

This is Large ribosomal subunit protein uL30 from Methylorubrum extorquens (strain CM4 / NCIMB 13688) (Methylobacterium extorquens).